A 217-amino-acid chain; its full sequence is Homologous-pairing protein 2 homolog (217 aa).

Residues 93–153 (IVALTAKVQS…LKNIKAATNH (61 aa)) are a coiled coil. Residues 118 to 182 (SSALTTPEMQ…WRKRKRMATE (65 aa)) form a DNA-binding region.

This sequence belongs to the HOP2 family. In terms of assembly, interacts with the DNA-binding domain of the nuclear receptors NR3C1/GR, ESR2/ER-beta, THRB and RXRA. Forms a stable heterodimer with MND1. Interacts with PSMC3/TBP1. In terms of processing, PTM: Phosphorylated by PKA, PKC and MAPK. Highly expressed in testis and colon.

It is found in the nucleus. Its function is as follows. Plays an important role in meiotic recombination. Stimulates DMC1-mediated strand exchange required for pairing homologous chromosomes during meiosis. The complex PSMC3IP/MND1 binds DNA, stimulates the recombinase activity of DMC1 as well as DMC1 D-loop formation from double-strand DNA. This complex stabilizes presynaptic RAD51 and DMC1 filaments formed on single strand DNA to capture double-strand DNA. This complex stimulates both synaptic and presynaptic critical steps in RAD51 and DMC1-promoted homologous pairing. May inhibit HIV-1 viral protein TAT activity and modulate the activity of proteasomes through association with PSMC3. Acts as a tissue specific coactivator of hormone-dependent transcription mediated by nuclear receptors. The protein is Homologous-pairing protein 2 homolog (PSMC3IP) of Homo sapiens (Human).